The chain runs to 852 residues: Patatin-like phospholipase domain-containing protein CaO19.1504 (852 aa).

Residues 41 to 52 (ATTDITTTPIND) show a composition bias toward low complexity. A disordered region spans residues 41–184 (ATTDITTTPI…KKTTPTSSTS (144 aa)). The span at 75–95 (INGTVSDSSSITDEDIMNSSY) shows a compositional bias: polar residues. Low complexity predominate over residues 101 to 110 (SSTNLKSNST). Residues 113–122 (DDDDDDDDDD) are compositionally biased toward acidic residues. Composition is skewed to low complexity over residues 129 to 142 (SGTT…SLSS) and 158 to 171 (GGSR…KGSS). The chain crosses the membrane as a helical span at residues 207–227 (WPILIFVFSWIGILGIFYFMI). Residues 396–588 (LCLSGGACFA…RTDIPIEALN (193 aa)) enclose the PNPLA domain. The GXSXG signature appears at 427–431 (GTSGG). The Nucleophile role is filled by S429. The active-site Proton acceptor is D575. A disordered region spans residues 800-840 (KKLLDELDNEDEEEDEEEEEVDVDDDDDDDDDSLSDSFEIT). A compositionally biased stretch (acidic residues) spans 805–833 (ELDNEDEEEDEEEEEVDVDDDDDDDDDSL).

Belongs to the PLPL family.

Its subcellular location is the membrane. In terms of biological role, probable lipid hydrolase. This Candida albicans (strain SC5314 / ATCC MYA-2876) (Yeast) protein is Patatin-like phospholipase domain-containing protein CaO19.1504.